A 935-amino-acid chain; its full sequence is C-1-tetrahydrofolate synthase, cytoplasmic (935 aa).

Position 1 is an N-acetylmethionine (M1). A methylenetetrahydrofolate dehydrogenase and methenyltetrahydrofolate cyclohydrolase (D/C) domain region spans residues 2–291 (APAEILNGRE…MLMQSTVESA (290 aa)). Substrate is bound by residues 52-56 (YINVK) and 99-101 (VQL). The active site involves K56. NADP(+)-binding positions include 172–174 (GRS) and S197. Residue 272–276 (PGGVG) participates in substrate binding. Positions 310-935 (LNLKTPDPSD…PETQQVNGLF (626 aa)) are formyltetrahydrofolate synthetase domain. S318 carries the post-translational modification Phosphoserine. Residue 380–387 (TPLGEGKS) participates in ATP binding. A phosphoserine mark is found at S413 and S490.

It in the N-terminal section; belongs to the tetrahydrofolate dehydrogenase/cyclohydrolase family. In the C-terminal section; belongs to the formate--tetrahydrofolate ligase family. In terms of assembly, homodimer.

The protein resides in the cytoplasm. The enzyme catalyses (6R)-5,10-methylene-5,6,7,8-tetrahydrofolate + NADP(+) = (6R)-5,10-methenyltetrahydrofolate + NADPH. It catalyses the reaction (6R)-5,10-methenyltetrahydrofolate + H2O = (6R)-10-formyltetrahydrofolate + H(+). It carries out the reaction (6S)-5,6,7,8-tetrahydrofolate + formate + ATP = (6R)-10-formyltetrahydrofolate + ADP + phosphate. It participates in one-carbon metabolism; tetrahydrofolate interconversion. Trifunctional enzyme that catalyzes the interconversion of three forms of one-carbon-substituted tetrahydrofolate: (6R)-5,10-methylene-5,6,7,8-tetrahydrofolate, 5,10-methenyltetrahydrofolate and (6S)-10-formyltetrahydrofolate. These derivatives of tetrahydrofolate are differentially required in nucleotide and amino acid biosynthesis, (6S)-10-formyltetrahydrofolate being required for purine biosynthesis while (6R)-5,10-methylene-5,6,7,8-tetrahydrofolate is used for serine and methionine biosynthesis for instance. The polypeptide is C-1-tetrahydrofolate synthase, cytoplasmic (MTHFD1) (Pongo abelii (Sumatran orangutan)).